Consider the following 361-residue polypeptide: Caveolae-associated protein 4 (361 aa).

The segment at 1-21 (MEHNGSASNADKIHQNRLSNV) is disordered. The stretch at 100–124 (IKDVKARVEKQQTHVKKVEAKQEEI) forms a coiled coil. Phosphoserine occurs at positions 152, 171, and 172. Residues 204-248 (ENMQKTRQNFDKKVNRIRTRIVTPERRERLRQSGERLRQSGERLK) adopt a coiled-coil conformation. Basic and acidic residues predominate over residues 230-255 (RERLRQSGERLRQSGERLKQSGERFK). Disordered regions lie at residues 230 to 283 (RERL…AVAE) and 310 to 346 (PEAL…FKPQ). T335 carries the post-translational modification Phosphothreonine. S354 bears the Phosphoserine mark.

This sequence belongs to the CAVIN family. As to quaternary structure, component of the CAVIN complex composed of CAVIN1, CAVIN2, CAVIN3 and CAVIN4. Interacts with CAVIN1, ADRA1A, ADRA1B, MAPK1 and MAPK3. Interacts with CAVIN2; this augments the transactivation of NPPA.

The protein localises to the cytoplasm. The protein resides in the myofibril. Its subcellular location is the sarcomere. It is found in the cytosol. It localises to the cell membrane. The protein localises to the sarcolemma. The protein resides in the membrane. Its subcellular location is the caveola. Modulates the morphology of formed caveolae in cardiomyocytes, but is not required for caveolar formation. Facilitates the recruitment of MAPK1/3 to caveolae within cardiomyocytes and regulates alpha-1 adrenergic receptor-induced hypertrophic responses in cardiomyocytes through MAPK1/3 activation. Contributes to proper membrane localization and stabilization of caveolin-3 (CAV3) in cardiomyocytes. Induces RHOA activation and activates NPPA transcription and myofibrillar organization through the Rho/ROCK signaling pathway. This is Caveolae-associated protein 4 (CAVIN4) from Bos taurus (Bovine).